A 214-amino-acid chain; its full sequence is Adenylate kinase (214 aa).

10–15 (GAGKGT) serves as a coordination point for ATP. Positions 30–59 (STGDMLRAAIKAGTELGLEAKRVMDEGKLV) are NMP. Residues threonine 31, arginine 36, 57–59 (KLV), 85–88 (GFPR), and glutamine 92 each bind AMP. The tract at residues 122–159 (GRRVHPASGRVYHVVYNPPKVEGKDNETGDDLIVRDDD) is LID. ATP is bound by residues arginine 123 and 132-133 (VY). Residues arginine 156 and arginine 167 each coordinate AMP. An ATP-binding site is contributed by arginine 200.

It belongs to the adenylate kinase family. As to quaternary structure, monomer.

The protein resides in the cytoplasm. It catalyses the reaction AMP + ATP = 2 ADP. Its pathway is purine metabolism; AMP biosynthesis via salvage pathway; AMP from ADP: step 1/1. In terms of biological role, catalyzes the reversible transfer of the terminal phosphate group between ATP and AMP. Plays an important role in cellular energy homeostasis and in adenine nucleotide metabolism. In Alteromonas mediterranea (strain DSM 17117 / CIP 110805 / LMG 28347 / Deep ecotype), this protein is Adenylate kinase.